A 249-amino-acid polypeptide reads, in one-letter code: DNA polymerase sliding clamp (249 aa).

Belongs to the PCNA family. Homotrimer. The subunits circularize to form a toroid; DNA passes through its center. Replication factor C (RFC) is required to load the toroid on the DNA.

Sliding clamp subunit that acts as a moving platform for DNA processing. Responsible for tethering the catalytic subunit of DNA polymerase and other proteins to DNA during high-speed replication. The chain is DNA polymerase sliding clamp from Pyrococcus horikoshii (strain ATCC 700860 / DSM 12428 / JCM 9974 / NBRC 100139 / OT-3).